Reading from the N-terminus, the 84-residue chain is Anaphase-promoting complex subunit 11 (84 aa).

Zn(2+) contacts are provided by Cys23, Cys26, Cys34, Cys37, Cys44, Cys51, His53, His56, His58, Cys59, Cys73, and Cys76. Residues 34 to 77 (CPDCKVPGDDCPLVWGQCSHCFHMHCILKWLNAQQVQQHCPMCR) form an RING-type zinc finger.

It belongs to the RING-box family. The mammalian APC/C is composed at least of 14 distinct subunits ANAPC1, ANAPC2, CDC27/APC3, ANAPC4, ANAPC5, CDC16/APC6, ANAPC7, CDC23/APC8, ANAPC10, ANAPC11, CDC26/APC12, ANAPC13, ANAPC15 and ANAPC16 that assemble into a complex of at least 19 chains with a combined molecular mass of around 1.2 MDa; APC/C interacts with FZR1 and FBXO5. Interacts with the cullin domain of ANAPC2. Interacts with UBE2D2. Post-translationally, auto-ubiquitinated.

It is found in the cytoplasm. The protein localises to the nucleus. It participates in protein modification; protein ubiquitination. In terms of biological role, together with the cullin protein ANAPC2, constitutes the catalytic component of the anaphase promoting complex/cyclosome (APC/C), a cell cycle-regulated E3 ubiquitin ligase that controls progression through mitosis and the G1 phase of the cell cycle. The APC/C complex acts by mediating ubiquitination and subsequent degradation of target proteins: it mainly mediates the formation of 'Lys-11'-linked polyubiquitin chains and, to a lower extent, the formation of 'Lys-48'- and 'Lys-63'-linked polyubiquitin chains. The APC/C complex catalyzes assembly of branched 'Lys-11'-/'Lys-48'-linked branched ubiquitin chains on target proteins. May recruit the E2 ubiquitin-conjugating enzymes to the complex. The polypeptide is Anaphase-promoting complex subunit 11 (ANAPC11) (Bos taurus (Bovine)).